The following is a 93-amino-acid chain: Guanine nucleotide-binding protein subunit gamma (93 aa).

Residues 1–22 (MPQYASRDVGDPSQIKKNKQSM) are disordered. Cys89 carries the S-palmitoyl cysteine lipid modification. The residue at position 90 (Cys90) is a Cysteine methyl ester. Residue Cys90 is the site of S-farnesyl cysteine attachment. The propeptide at 91–93 (VVM) is removed in mature form.

The protein belongs to the G protein gamma family. As to quaternary structure, g proteins are composed of 3 units, alpha, beta and gamma.

The protein localises to the membrane. The sequence is that of Guanine nucleotide-binding protein subunit gamma (gng-1) from Neurospora crassa (strain ATCC 24698 / 74-OR23-1A / CBS 708.71 / DSM 1257 / FGSC 987).